The primary structure comprises 482 residues: Phenylalanine--tRNA ligase alpha subunit (482 aa).

L-phenylalanine contacts are provided by residues Thr327, 366-368 (QIE), and Tyr406. Position 408 (Glu408) interacts with Mg(2+). Phe430 provides a ligand contact to L-phenylalanine.

This sequence belongs to the class-II aminoacyl-tRNA synthetase family. Phe-tRNA synthetase alpha subunit type 2 subfamily. Tetramer of two alpha and two beta subunits. Mg(2+) serves as cofactor.

It is found in the cytoplasm. It carries out the reaction tRNA(Phe) + L-phenylalanine + ATP = L-phenylalanyl-tRNA(Phe) + AMP + diphosphate + H(+). In Thermoplasma volcanium (strain ATCC 51530 / DSM 4299 / JCM 9571 / NBRC 15438 / GSS1), this protein is Phenylalanine--tRNA ligase alpha subunit.